The chain runs to 188 residues: Elongation factor P (188 aa).

This sequence belongs to the elongation factor P family.

Its subcellular location is the cytoplasm. It functions in the pathway protein biosynthesis; polypeptide chain elongation. In terms of biological role, involved in peptide bond synthesis. Stimulates efficient translation and peptide-bond synthesis on native or reconstituted 70S ribosomes in vitro. Probably functions indirectly by altering the affinity of the ribosome for aminoacyl-tRNA, thus increasing their reactivity as acceptors for peptidyl transferase. The chain is Elongation factor P from Stutzerimonas stutzeri (strain A1501) (Pseudomonas stutzeri).